A 476-amino-acid polypeptide reads, in one-letter code: Beta-amyrin 28-monooxygenase (476 aa).

Residues 2-22 traverse the membrane as a helical segment; the sequence is ELLYVCLVCVFVFLVSLLLLY. C421 provides a ligand contact to heme.

It belongs to the cytochrome P450 family. The cofactor is heme. In terms of tissue distribution, specifically expressed in roots.

The protein localises to the membrane. The enzyme catalyses beta-amyrin + 3 reduced [NADPH--hemoprotein reductase] + 3 O2 = oleanolate + 3 oxidized [NADPH--hemoprotein reductase] + 4 H2O + 4 H(+). Catalyzes the carboxylation of beta-amyrin at the C-28 position to form oleanolate. Catalyzes the carboxylation of alpha-amyrin at the C-28 position to form ursolate. This is Beta-amyrin 28-monooxygenase (CYP716A44) from Solanum lycopersicum (Tomato).